The chain runs to 219 residues: Proteasome subunit beta type-9 (219 aa).

A propeptide spans 1–20 (MLRAGAPTAGSFRTEEVHTG) (removed in mature form). Thr21 functions as the Nucleophile in the catalytic mechanism. Lys53 and Lys109 each carry N6-acetyllysine.

Belongs to the peptidase T1B family. The 26S proteasome consists of a 20S proteasome core and two 19S regulatory subunits. The 20S proteasome core is composed of 28 subunits that are arranged in four stacked rings, resulting in a barrel-shaped structure. The two end rings are each formed by seven alpha subunits, and the two central rings are each formed by seven beta subunits. The catalytic chamber with the active sites is on the inside of the barrel. Component of the immunoproteasome, where it displaces the equivalent housekeeping subunit PSMB6. Component of the spermatoproteasome, a form of the proteasome specifically found in testis. Autocleaved. The resulting N-terminal Thr residue of the mature subunit is responsible for the nucleophile proteolytic activity.

The protein resides in the cytoplasm. It localises to the nucleus. It catalyses the reaction Cleavage of peptide bonds with very broad specificity.. Its function is as follows. The proteasome is a multicatalytic proteinase complex which is characterized by its ability to cleave peptides with Arg, Phe, Tyr, Leu, and Glu adjacent to the leaving group at neutral or slightly basic pH. The proteasome has an ATP-dependent proteolytic activity. This subunit is involved in antigen processing to generate class I binding peptides. In Mus musculus bactrianus (Southwestern Asian house mouse), this protein is Proteasome subunit beta type-9 (Psmb9).